A 157-amino-acid chain; its full sequence is Protein-export protein SecB (157 aa).

This sequence belongs to the SecB family. Homotetramer, a dimer of dimers. One homotetramer interacts with 1 SecA dimer.

Its subcellular location is the cytoplasm. In terms of biological role, one of the proteins required for the normal export of preproteins out of the cell cytoplasm. It is a molecular chaperone that binds to a subset of precursor proteins, maintaining them in a translocation-competent state. It also specifically binds to its receptor SecA. This chain is Protein-export protein SecB, found in Proteus mirabilis (strain HI4320).